A 428-amino-acid polypeptide reads, in one-letter code: D-amino acid dehydrogenase (428 aa).

Val3–Tyr17 serves as a coordination point for FAD.

It belongs to the DadA oxidoreductase family. Requires FAD as cofactor.

The catalysed reaction is a D-alpha-amino acid + A + H2O = a 2-oxocarboxylate + AH2 + NH4(+). It participates in amino-acid degradation; D-alanine degradation; NH(3) and pyruvate from D-alanine: step 1/1. Functionally, oxidative deamination of D-amino acids. This Burkholderia multivorans (strain ATCC 17616 / 249) protein is D-amino acid dehydrogenase.